Consider the following 322-residue polypeptide: MKKIAVLTSGGDSPGMNAAVRAVTRTAIYNNIEVYGVYQGYQGLLDDDIHKLELGSVGDTIQRGGTFLFSARCPQFKEEDVRKKAIENLRKRGIEGLVVIGGDGSYRGAQRISEECKEIQTIGIPGTIDNDINGTDFTIGFDTALNTIIESVDKIRDTASSHARTFIVEVMGRDCGDLALWAGLSVGAETIVLPEVNTDIKDVAEKIEQGIKRGKKHSIVMVAEGCMSGQECADELTKYINIDTRVSVLGHIQRGGSPSGADRVLASRLGGYAVELLKQGETAKGVGIRNNQLTSTPFDEIFAESNRKFNSQMYELAKELSI.

Residue Gly-11 participates in ATP binding. ADP is bound at residue 21–25 (RAVTR). Residues 72-73 (RC) and 102-105 (GDGS) each bind ATP. A Mg(2+)-binding site is contributed by Asp-103. 127 to 129 (TID) serves as a coordination point for substrate. The active-site Proton acceptor is the Asp-129. Arg-156 serves as a coordination point for ADP. Residues Arg-164 and 171-173 (MGR) contribute to the substrate site. ADP-binding positions include 187 to 189 (GAE), Arg-213, and 215 to 217 (KKH). Residues Glu-224, Arg-245, and 251–254 (HIQR) contribute to the substrate site.

Belongs to the phosphofructokinase type A (PFKA) family. ATP-dependent PFK group I subfamily. Prokaryotic clade 'B1' sub-subfamily. As to quaternary structure, homotetramer. Requires Mg(2+) as cofactor.

The protein localises to the cytoplasm. It catalyses the reaction beta-D-fructose 6-phosphate + ATP = beta-D-fructose 1,6-bisphosphate + ADP + H(+). It participates in carbohydrate degradation; glycolysis; D-glyceraldehyde 3-phosphate and glycerone phosphate from D-glucose: step 3/4. Its activity is regulated as follows. Allosterically activated by ADP and other diphosphonucleosides, and allosterically inhibited by phosphoenolpyruvate. Its function is as follows. Catalyzes the phosphorylation of D-fructose 6-phosphate to fructose 1,6-bisphosphate by ATP, the first committing step of glycolysis. This chain is ATP-dependent 6-phosphofructokinase, found in Staphylococcus epidermidis (strain ATCC 35984 / DSM 28319 / BCRC 17069 / CCUG 31568 / BM 3577 / RP62A).